We begin with the raw amino-acid sequence, 473 residues long: tRNA-2-methylthio-N(6)-dimethylallyladenosine synthase (473 aa).

The MTTase N-terminal domain occupies 5 to 125 (RKLHIKSYGC…LPQLLARADQ (121 aa)). Positions 14, 50, 88, 166, 170, and 173 each coordinate [4Fe-4S] cluster. One can recognise a Radical SAM core domain in the interval 152–384 (RARGISAFVT…QQLIDSQQSA (233 aa)). The 73-residue stretch at 387–459 (KAAIGQTVDV…RYSLLGELAA (73 aa)) folds into the TRAM domain.

It belongs to the methylthiotransferase family. MiaB subfamily. As to quaternary structure, monomer. [4Fe-4S] cluster serves as cofactor.

It localises to the cytoplasm. It carries out the reaction N(6)-dimethylallyladenosine(37) in tRNA + (sulfur carrier)-SH + AH2 + 2 S-adenosyl-L-methionine = 2-methylsulfanyl-N(6)-dimethylallyladenosine(37) in tRNA + (sulfur carrier)-H + 5'-deoxyadenosine + L-methionine + A + S-adenosyl-L-homocysteine + 2 H(+). Its function is as follows. Catalyzes the methylthiolation of N6-(dimethylallyl)adenosine (i(6)A), leading to the formation of 2-methylthio-N6-(dimethylallyl)adenosine (ms(2)i(6)A) at position 37 in tRNAs that read codons beginning with uridine. The protein is tRNA-2-methylthio-N(6)-dimethylallyladenosine synthase of Rhodopseudomonas palustris (strain BisB5).